The following is a 156-amino-acid chain: MIQSQHSQTARHALAETVVLAKARKNLSFAQLTEGTGLSEAFVTAALLGQHALPVDAARNVADKLGLDDDAVLLLQSIPLRGSIDDRVPTDPTIYRFYEMLQVYGTTLKALVHEKFGDGIISAINFRLDVKKVDDPEGGSRAVITLDGKYLPTKPF.

Catalysis depends on residues Arg96, Glu99, and Ser122.

Belongs to the cyanase family.

The enzyme catalyses cyanate + hydrogencarbonate + 3 H(+) = NH4(+) + 2 CO2. Catalyzes the reaction of cyanate with bicarbonate to produce ammonia and carbon dioxide. This Burkholderia lata (strain ATCC 17760 / DSM 23089 / LMG 22485 / NCIMB 9086 / R18194 / 383) protein is Cyanate hydratase.